Here is a 510-residue protein sequence, read N- to C-terminus: Chromosomal replication initiator protein DnaA (510 aa).

The interval 1–107 (MTNDPGSGFA…VRIAPPPADD (107 aa)) is domain I, interacts with DnaA modulators. The domain II stretch occupies residues 107–169 (DDDDSVAAAV…ADTSASAGGT (63 aa)). A disordered region spans residues 119–168 (PGLEASPETSQEVSDEIDDFGENAPNSRQSWPTHFKKRSTDADTSASAGG). The segment at 170–386 (SLNRRYTFDT…GALIRVTAFA (217 aa)) is domain III, AAA+ region. ATP is bound by residues G214, G216, K217, and T218. Residues 387 to 510 (SLNKTPIDKA…TTRIRQRSKR (124 aa)) form a domain IV, binds dsDNA region.

Belongs to the DnaA family. As to quaternary structure, oligomerizes as a right-handed, spiral filament on DNA at oriC.

It is found in the cytoplasm. Functionally, plays an essential role in the initiation and regulation of chromosomal replication. ATP-DnaA binds to the origin of replication (oriC) to initiate formation of the DNA replication initiation complex once per cell cycle. Binds the DnaA box (a 9 base pair repeat at the origin) and separates the double-stranded (ds)DNA. Forms a right-handed helical filament on oriC DNA; dsDNA binds to the exterior of the filament while single-stranded (ss)DNA is stabiized in the filament's interior. The ATP-DnaA-oriC complex binds and stabilizes one strand of the AT-rich DNA unwinding element (DUE), permitting loading of DNA polymerase. After initiation quickly degrades to an ADP-DnaA complex that is not apt for DNA replication. Binds acidic phospholipids. In Mycobacterium marinum (strain ATCC BAA-535 / M), this protein is Chromosomal replication initiator protein DnaA.